Reading from the N-terminus, the 242-residue chain is Probable transcriptional regulatory protein NMA1902 (242 aa).

The protein belongs to the TACO1 family.

Its subcellular location is the cytoplasm. This Neisseria meningitidis serogroup A / serotype 4A (strain DSM 15465 / Z2491) protein is Probable transcriptional regulatory protein NMA1902.